A 337-amino-acid chain; its full sequence is Protein FAM169B (337 aa).

Residues 278–326 (STVHPKCSEEDTDTPGQASQEDGPTQFNHGESHKEWAVGEPERTQNGRR) are disordered. The span at 291-306 (TPGQASQEDGPTQFNH) shows a compositional bias: polar residues. Positions 307–322 (GESHKEWAVGEPERTQ) are enriched in basic and acidic residues.

Belongs to the FAM169 family.

The sequence is that of Protein FAM169B (Fam169b) from Mus musculus (Mouse).